The chain runs to 231 residues: Probable transaldolase (231 aa).

K83 (schiff-base intermediate with substrate) is an active-site residue.

Belongs to the transaldolase family. Type 3B subfamily.

It is found in the cytoplasm. It catalyses the reaction D-sedoheptulose 7-phosphate + D-glyceraldehyde 3-phosphate = D-erythrose 4-phosphate + beta-D-fructose 6-phosphate. It functions in the pathway carbohydrate degradation; pentose phosphate pathway; D-glyceraldehyde 3-phosphate and beta-D-fructose 6-phosphate from D-ribose 5-phosphate and D-xylulose 5-phosphate (non-oxidative stage): step 2/3. Its function is as follows. Transaldolase is important for the balance of metabolites in the pentose-phosphate pathway. This is Probable transaldolase from Rhodospirillum centenum (strain ATCC 51521 / SW).